The primary structure comprises 520 residues: MNPDLDTGHNTSAPAHWGELKNANFTGPNQTSSNSTLPQLDITRAISVGLVLGAFILFAIVGNILVILSVACNRHLRTPTNYFIVNLAMADLLLSFTVLPFSAALEVLGYWVLGRIFCDIWAAVDVLCCTASILSLCAISIDRYIGVRYSLQYPTLVTRRKAILALLSVWVLSTVISIGPLLGWKEPAPNDDKECGVTEEPFYALFSSLGSFYIPLAVILVMYCRVYIVAKRTTKNLEAGVMKEMSNSKELTLRIHSKNFHEDTLSSTKAKGHNPRSSIAVKLFKFSREKKAAKTLGIVVGMFILCWLPFFIALPLGSLFSTLKPPDAVFKVVFWLGYFNSCLNPIIYPCSSKEFKRAFVRILGCQCRGRGRRRRRRRRRLGGCAYTYRPWTRGGSLERSQSRKDSLDDSGSCLSGSQRTLPSASPSPGYLGRGAPPPVELCAFPEWKAPGALLSLPAPEPPGRRGRHDSGPLFTFKLLTEPESPGTDGGASNGGCEAAADVANGQPGFKSNMPLAPGQF.

Residues 1–45 (MNPDLDTGHNTSAPAHWGELKNANFTGPNQTSSNSTLPQLDITRA) are Extracellular-facing. N-linked (GlcNAc...) asparagine glycans are attached at residues asparagine 10, asparagine 24, asparagine 29, and asparagine 34. The chain crosses the membrane as a helical span at residues 46–70 (ISVGLVLGAFILFAIVGNILVILSV). The Cytoplasmic portion of the chain corresponds to 71–83 (ACNRHLRTPTNYF). The chain crosses the membrane as a helical span at residues 84-105 (IVNLAMADLLLSFTVLPFSAAL). Residues 106–115 (EVLGYWVLGR) are Extracellular-facing. A helical membrane pass occupies residues 116–141 (IFCDIWAAVDVLCCTASILSLCAISI). A disulfide bridge links cysteine 118 with cysteine 195. At 142 to 161 (DRYIGVRYSLQYPTLVTRRK) the chain is on the cytoplasmic side. Residues 162–184 (AILALLSVWVLSTVISIGPLLGW) form a helical membrane-spanning segment. The Extracellular segment spans residues 185 to 201 (KEPAPNDDKECGVTEEP). Residues 202-224 (FYALFSSLGSFYIPLAVILVMYC) form a helical membrane-spanning segment. Residues 225 to 295 (RVYIVAKRTT…FSREKKAAKT (71 aa)) are Cytoplasmic-facing. Threonine 264 carries the post-translational modification Phosphothreonine. The helical transmembrane segment at 296–319 (LGIVVGMFILCWLPFFIALPLGSL) threads the bilayer. Residues 320 to 326 (FSTLKPP) lie on the Extracellular side of the membrane. A helical transmembrane segment spans residues 327–351 (DAVFKVVFWLGYFNSCLNPIIYPCS). Residues 352-520 (SKEFKRAFVR…SNMPLAPGQF (169 aa)) lie on the Cytoplasmic side of the membrane. The S-palmitoyl cysteine moiety is linked to residue cysteine 365. Positions 368–380 (RGRGRRRRRRRRR) match the Nuclear localization signal motif. Disordered stretches follow at residues 394-432 (GGSL…GYLG) and 479-520 (LTEP…PGQF).

The protein belongs to the G-protein coupled receptor 1 family. Adrenergic receptor subfamily. ADRA1B sub-subfamily. As to quaternary structure, homo- and heterooligomer. Heterooligomerizes with ADRA1B homooligomers in cardiac myocytes. Interacts with CAVIN4.

Its subcellular location is the nucleus membrane. It is found in the cell membrane. The protein localises to the cytoplasm. It localises to the membrane. The protein resides in the caveola. Its function is as follows. This alpha-adrenergic receptor mediates its action by association with G proteins that activate a phosphatidylinositol-calcium second messenger system. Its effect is mediated by G(q) and G(11) proteins. Nuclear ADRA1A-ADRA1B heterooligomers regulate phenylephrine (PE)-stimulated ERK signaling in cardiac myocytes. This is Alpha-1B adrenergic receptor (ADRA1B) from Homo sapiens (Human).